The primary structure comprises 619 residues: Chaperone protein DnaK (619 aa).

Phosphothreonine; by autocatalysis is present on T175. The disordered stretch occupies residues 578 to 619 (NGGAQGEGFDPNNMGGANAGTGAANSNDDNVVDADFEVQDDK). The span at 589-606 (NNMGGANAGTGAANSNDD) shows a compositional bias: low complexity. Residues 607–619 (NVVDADFEVQDDK) show a composition bias toward acidic residues.

This sequence belongs to the heat shock protein 70 family.

Acts as a chaperone. This Clostridium perfringens (strain SM101 / Type A) protein is Chaperone protein DnaK.